The sequence spans 273 residues: Phosphatidylglycerol--prolipoprotein diacylglyceryl transferase (273 aa).

Helical transmembrane passes span 19–39 (VHWY…LASY), 55–75 (LVFY…VLFY), 90–110 (VWTG…AMIL), 125–145 (FIAP…FIGA), 174–194 (PSQI…LWWF), 202–222 (MAVS…VEFF), and 230–250 (GFIL…MLLI). Arg-138 contacts a 1,2-diacyl-sn-glycero-3-phospho-(1'-sn-glycerol).

Belongs to the Lgt family.

It is found in the cell inner membrane. It carries out the reaction L-cysteinyl-[prolipoprotein] + a 1,2-diacyl-sn-glycero-3-phospho-(1'-sn-glycerol) = an S-1,2-diacyl-sn-glyceryl-L-cysteinyl-[prolipoprotein] + sn-glycerol 1-phosphate + H(+). Its pathway is protein modification; lipoprotein biosynthesis (diacylglyceryl transfer). Catalyzes the transfer of the diacylglyceryl group from phosphatidylglycerol to the sulfhydryl group of the N-terminal cysteine of a prolipoprotein, the first step in the formation of mature lipoproteins. The polypeptide is Phosphatidylglycerol--prolipoprotein diacylglyceryl transferase (Acinetobacter baylyi (strain ATCC 33305 / BD413 / ADP1)).